The chain runs to 252 residues: Uracil-DNA glycosylase (252 aa).

Aspartate 87 serves as the catalytic Proton acceptor.

The protein belongs to the uracil-DNA glycosylase (UDG) superfamily. UNG family.

Its subcellular location is the host nucleus. The catalysed reaction is Hydrolyzes single-stranded DNA or mismatched double-stranded DNA and polynucleotides, releasing free uracil.. Excises uracil residues from the DNA which can arise as a result of misincorporation of dUMP residues by DNA polymerase or deamination of cytosines. Therefore may reduce deleterious uracil incorporation into the viral genome, particularly in terminally differentiated cells which lack DNA repair enzymes. The protein is Uracil-DNA glycosylase (46) of Saimiri sciureus (Common squirrel monkey).